The following is a 99-amino-acid chain: Putative septation protein SpoVG (99 aa).

The protein belongs to the SpoVG family.

Its function is as follows. Could be involved in septation. This chain is Putative septation protein SpoVG, found in Myxococcus xanthus (strain DK1622).